The following is a 505-amino-acid chain: Geissoschizine oxidase (505 aa).

The helical transmembrane segment at Phe-9–Ile-29 threads the bilayer. Cys-443 is a heme binding site.

It belongs to the cytochrome P450 family. Heme serves as cofactor. Mainly expressed in roots.

The protein resides in the membrane. It catalyses the reaction (19E)-geissoschizine + reduced [NADPH--hemoprotein reductase] + O2 = akuammicine + formate + oxidized [NADPH--hemoprotein reductase] + H2O + H(+). It carries out the reaction (19E)-geissoschizine + reduced [NADPH--hemoprotein reductase] + O2 = 3,17-didehydrostemmadenine + oxidized [NADPH--hemoprotein reductase] + 2 H2O. The enzyme catalyses 3,17-didehydrostemmadenine = 17-dehydropreakuammicine. It functions in the pathway alkaloid biosynthesis. Monooxygenase involved in the biosynthesis of curare monoterpene indole alkaloids (MIAs), natural products such as strychnine, a neurotoxic compound used as a pesticide to control rodents, and its pharmacologically active derivatives, including brucine, used to regulate blood pressure. Curare alkaloids act as animal glycine receptor antagonists. Catalyzes the conversion of geissoschizine to dehydropreakuammicine by cyclization, which is spontaneously converted into akuammicine by aromatization. This Strychnos nux-vomica (Poison nut) protein is Geissoschizine oxidase.